The following is an 83-amino-acid chain: Protein Vpr (83 aa).

The residue at position 79 (Ser79) is a Phosphoserine; by host.

As to quaternary structure, interacts with human UNG.

It is found in the virion. The protein localises to the host nucleus. Functionally, stimulates gene expression driven by the HIV-2 LTR. Prevents infected cells from undergoing mitosis and proliferating, by inducing arrest or delay in the G2 phase of the cell cycle. Cell cycle arrest creates a favorable environment for maximizing viral expression and production. This Pan troglodytes (Chimpanzee) protein is Protein Vpr.